The chain runs to 347 residues: UDP-N-acetylenolpyruvoylglucosamine reductase (347 aa).

One can recognise an FAD-binding PCMH-type domain in the interval 23–197 (LPARAARLLR…LRVRFRLPQA (175 aa)). Residue Arg174 is part of the active site. Ser247 functions as the Proton donor in the catalytic mechanism. Glu343 is an active-site residue.

The protein belongs to the MurB family. It depends on FAD as a cofactor.

Its subcellular location is the cytoplasm. The catalysed reaction is UDP-N-acetyl-alpha-D-muramate + NADP(+) = UDP-N-acetyl-3-O-(1-carboxyvinyl)-alpha-D-glucosamine + NADPH + H(+). It participates in cell wall biogenesis; peptidoglycan biosynthesis. In terms of biological role, cell wall formation. The sequence is that of UDP-N-acetylenolpyruvoylglucosamine reductase from Azoarcus sp. (strain BH72).